A 491-amino-acid chain; its full sequence is MYKILFATSEAHPLIKTGGLGDVAGILPIELARLGLEAGIILPAYPACKTHLKNLKEVARLRLPAALEPVRILKGQLLEGPNPVWLVDSPAHFDRPGNPYLNEQGQDWPDNAARFTTFCRAVATLANSPEFDWQPDLIHCNDWQTGLIPPFLAPLRSRPATLFTIHNLAYQGVFSRQQFDALELPSAWWSPAALEFYNQISFIKGGLVFADWLTTVSPTYAKEILTPEFGCGLDGVLRGRSKRLTGILNGADYQRWDPRHDPFIEKRYDQTCWSHKASNKLALQRRYGLPEDDTLPVLGFVGRLVEQKGIDLILGALPKLLAEKIQVVFLGEGEERHQNALQQLASRYPNQIGVSISYDERLAHGVQAGADIFLMPSRFEPCGLTQLYALRYGTVPIARRTGGLSDTIVDATEKNLRQELATGFTFTESSPSALLTAIQRALACYAQSRQWRRLALTGMAQNFSWQTSAKAYFDLYQQLVSQEFSCKNNVL.

ADP-alpha-D-glucose is bound at residue lysine 16.

This sequence belongs to the glycosyltransferase 1 family. Bacterial/plant glycogen synthase subfamily.

The catalysed reaction is [(1-&gt;4)-alpha-D-glucosyl](n) + ADP-alpha-D-glucose = [(1-&gt;4)-alpha-D-glucosyl](n+1) + ADP + H(+). The protein operates within glycan biosynthesis; glycogen biosynthesis. In terms of biological role, synthesizes alpha-1,4-glucan chains using ADP-glucose. The sequence is that of Glycogen synthase 2 from Nitrosococcus oceani (strain ATCC 19707 / BCRC 17464 / JCM 30415 / NCIMB 11848 / C-107).